The chain runs to 504 residues: Maturase K (504 aa).

This sequence belongs to the intron maturase 2 family. MatK subfamily.

It localises to the plastid. The protein localises to the chloroplast. Functionally, usually encoded in the trnK tRNA gene intron. Probably assists in splicing its own and other chloroplast group II introns. This chain is Maturase K, found in Fagus japonica (Japanese beech).